Reading from the N-terminus, the 344-residue chain is Methionine import ATP-binding protein MetN (344 aa).

The ABC transporter domain occupies 2–241 (LELKQVGKVY…PQAEVTKAFV (240 aa)). 38-45 (GYSGAGKS) serves as a coordination point for ATP.

Belongs to the ABC transporter superfamily. Methionine importer (TC 3.A.1.24) family. The complex is composed of two ATP-binding proteins (MetN), two transmembrane proteins (MetI) and a solute-binding protein (MetQ).

Its subcellular location is the cell membrane. The enzyme catalyses L-methionine(out) + ATP + H2O = L-methionine(in) + ADP + phosphate + H(+). It carries out the reaction D-methionine(out) + ATP + H2O = D-methionine(in) + ADP + phosphate + H(+). Functionally, part of the ABC transporter complex MetNIQ involved in methionine import. Responsible for energy coupling to the transport system. The chain is Methionine import ATP-binding protein MetN from Latilactobacillus sakei subsp. sakei (strain 23K) (Lactobacillus sakei subsp. sakei).